The chain runs to 163 residues: MSLELHFAVSQFLYKKAELCDNYDWDAYIDLYDEDSEYHIPQWIDDHNYVQDPNQGLSYIYYEDRSGLEDRVFRIRTGKAASATPLPRTQHNIHNVQVKTLEDGLIEAKVSWRTLYNRQGLEGCFYGRATYVLRPTEDSFRIRRQHSVLLNDKIDSVLDFYHV.

The protein belongs to the bacterial ring-hydroxylating dioxygenase beta subunit family. As to quaternary structure, the anthranilate dioxygenase (AntDO) multicomponent enzyme system is composed of an oxygenase component and a NADH:acceptor reductase component (AntC). The oxygenase component is a heterohexamer of 3 large (AntA) and 3 small (AntB) subunits.

It carries out the reaction anthranilate + NADH + O2 + 3 H(+) = catechol + NH4(+) + CO2 + NAD(+). The enzyme catalyses anthranilate + NADPH + O2 + 3 H(+) = catechol + NH4(+) + CO2 + NADP(+). Its pathway is aromatic compound metabolism; anthranilate degradation via hydroxylation; catechol from anthranilate: step 1/1. Component of anthranilate dioxygenase multicomponent enzyme system which catalyzes the incorporation of both atoms of molecular oxygen into anthranilate to form catechol. The chain is Anthranilate 1,2-dioxygenase small subunit from Acinetobacter baylyi (strain ATCC 33305 / BD413 / ADP1).